Consider the following 543-residue polypeptide: MPNPKNSKGGRKNKRANSSGDEQENGAGALAAAGAAGAAAGGALAAAAGCGAAAAGAPGAGGAAGAGGAGTGAANAAAAAGAAAAGDAKNEAPCATPLICSFGRPVDLEKDDYQKVVCNNEHCPCSTWMHLQCFYEWESSILVQFNCIGRARSWNEKQCRQNMWTKKGYDLAFRFCSCRCGQGHLKKDTDWYQVKRMQDEKKKKSGSEKNTGRPPGEAAEEAKKCRPPNKPQKGPSHDLPRRHSMDRQNSQEKAVGAAAYGARSPGGSPGQSPPTGYSILSPAHFSGPRSSRYLGEFLKNAIHLEPHKKAMAGGHVFRNAHFDYSPAGLAVHRGGHFDTPVQFLRRLDLSELLTHIPRHKLNTFHVRMEDDAQVGQGEDLRKFILAALSASHRNVVNCALCHRALPVFEQFPLVDGTLFLSPSRHDEIEYDVPCHLQGRLMHLYAVCVDCLEGVHKIICIKCKSRWDGSWHQLGTMYTYDILAASPCCQARLNCKHCGKPVIDVRIGMQYFSEYSNVQQCPHCGNLDYHFVKPFSSFKVLEAY.

2 disordered regions span residues Met1–Gly26 and Met197–Ala283. Basic and acidic residues-rich tracts occupy residues Met197–Thr211 and Pro235–Ser250. A phosphoserine mark is found at Ser264 and Ser268.

As to expression, expressed in all tissues examined. Highest levels are in the spleen, thymus, peripheral blood and heart. Lowest in the kidney and pancreas.

In terms of biological role, may play an important role in some human cancers. May be part of the regulatory mechanism in the development of epithelial tube networks such as the circulatory system and lungs. The sequence is that of Headcase protein homolog (HECA) from Homo sapiens (Human).